Reading from the N-terminus, the 295-residue chain is ATP synthase gamma chain (295 aa).

This sequence belongs to the ATPase gamma chain family. F-type ATPases have 2 components, CF(1) - the catalytic core - and CF(0) - the membrane proton channel. CF(1) has five subunits: alpha(3), beta(3), gamma(1), delta(1), epsilon(1). CF(0) has three main subunits: a, b and c.

Its subcellular location is the cell inner membrane. Produces ATP from ADP in the presence of a proton gradient across the membrane. The gamma chain is believed to be important in regulating ATPase activity and the flow of protons through the CF(0) complex. The chain is ATP synthase gamma chain from Aliarcobacter butzleri (strain RM4018) (Arcobacter butzleri).